Consider the following 149-residue polypeptide: Ribonuclease pancreatic (149 aa).

An N-terminal signal peptide occupies residues 1 to 25; it reads MGLEKSFILFSLLVLVLGWVQPSLS. Basic and acidic residues predominate over residues 30-40; it reads ADKFKRQHMDT. The interval 30-49 is disordered; that stretch reads ADKFKRQHMDTEGSSNSSPT. Substrate-binding residues include lysine 32 and arginine 35. Histidine 37 acts as the Proton acceptor in catalysis. Cystine bridges form between cysteine 51-cysteine 109, cysteine 65-cysteine 120, cysteine 83-cysteine 135, and cysteine 90-cysteine 97. Residue asparagine 62 is glycosylated (N-linked (GlcNAc...) asparagine). Substrate is bound at residue 66–70; sequence KPVNT. An N-linked (GlcNAc...) asparagine glycan is attached at asparagine 87. The substrate site is built by lysine 91 and arginine 110. Histidine 144 serves as the catalytic Proton donor.

Belongs to the pancreatic ribonuclease family. In terms of assembly, monomer. Interacts with and forms tight 1:1 complexes with RNH1. Dimerization of two such complexes may occur. Interaction with RNH1 inhibits this protein. As to expression, pancreas.

The protein localises to the secreted. It carries out the reaction an [RNA] containing cytidine + H2O = an [RNA]-3'-cytidine-3'-phosphate + a 5'-hydroxy-ribonucleotide-3'-[RNA].. The catalysed reaction is an [RNA] containing uridine + H2O = an [RNA]-3'-uridine-3'-phosphate + a 5'-hydroxy-ribonucleotide-3'-[RNA].. Functionally, endonuclease that catalyzes the cleavage of RNA on the 3' side of pyrimidine nucleotides. Acts on single-stranded and double-stranded RNA. The polypeptide is Ribonuclease pancreatic (RNASE1) (Niviventer cremoriventer (Dark-tailed tree rat)).